A 553-amino-acid chain; its full sequence is Putative transport protein YidE (553 aa).

5 helical membrane passes run 4-24 (IALT…IGNV), 28-48 (GVGL…HFVS), 65-85 (FGLI…FFAS), 95-115 (LFAV…HKLF), and 158-178 (MSYA…MWML). RCK C-terminal domains lie at 191–276 (QQHE…VIGQ) and 279–361 (DTSL…VLGN). The next 6 membrane-spanning stretches (helical) occupy residues 371–391 (MLPV…PVFV), 393–413 (GFPA…ALIL), 439–459 (IVLF…HTLV), 464–484 (LSWI…VGIL), 493–513 (YLTM…LAFA), and 533–553 (LVMF…WSIG).

It belongs to the AAE transporter (TC 2.A.81) family. YidE subfamily.

It is found in the cell membrane. In Escherichia coli O6:H1 (strain CFT073 / ATCC 700928 / UPEC), this protein is Putative transport protein YidE.